Consider the following 173-residue polypeptide: Bifunctional protein PyrR (173 aa).

The PRPP-binding motif lies at 93–105 (IILVDDVLYTGRT).

It belongs to the purine/pyrimidine phosphoribosyltransferase family. PyrR subfamily. As to quaternary structure, homodimer and homohexamer; in equilibrium.

The enzyme catalyses UMP + diphosphate = 5-phospho-alpha-D-ribose 1-diphosphate + uracil. Functionally, regulates transcriptional attenuation of the pyrimidine nucleotide (pyr) operon by binding in a uridine-dependent manner to specific sites on pyr mRNA. This disrupts an antiterminator hairpin in the RNA and favors formation of a downstream transcription terminator, leading to a reduced expression of downstream genes. Its function is as follows. Also displays a weak uracil phosphoribosyltransferase activity which is not physiologically significant. This Streptococcus equi subsp. zooepidemicus (strain H70) protein is Bifunctional protein PyrR.